Reading from the N-terminus, the 161-residue chain is UPF0178 protein Rsph17025_3122 (161 aa).

Belongs to the UPF0178 family.

The protein is UPF0178 protein Rsph17025_3122 of Cereibacter sphaeroides (strain ATCC 17025 / ATH 2.4.3) (Rhodobacter sphaeroides).